We begin with the raw amino-acid sequence, 602 residues long: Elongation factor 4 (602 aa).

The region spanning 7–188 (ENIRNFSIIA…SIIRLVPPPK (182 aa)) is the tr-type G domain. Residues 19–24 (DHGKST) and 135–138 (NKID) each bind GTP.

Belongs to the TRAFAC class translation factor GTPase superfamily. Classic translation factor GTPase family. LepA subfamily.

The protein localises to the cell inner membrane. It carries out the reaction GTP + H2O = GDP + phosphate + H(+). Its function is as follows. Required for accurate and efficient protein synthesis under certain stress conditions. May act as a fidelity factor of the translation reaction, by catalyzing a one-codon backward translocation of tRNAs on improperly translocated ribosomes. Back-translocation proceeds from a post-translocation (POST) complex to a pre-translocation (PRE) complex, thus giving elongation factor G a second chance to translocate the tRNAs correctly. Binds to ribosomes in a GTP-dependent manner. This chain is Elongation factor 4, found in Chlamydia trachomatis serovar A (strain ATCC VR-571B / DSM 19440 / HAR-13).